A 99-amino-acid chain; its full sequence is Acylphosphatase-1 (99 aa).

The Acylphosphatase-like domain maps to 9–99 (SVDYEVFGKV…LEHSTFSICK (91 aa)). Catalysis depends on residues arginine 24 and asparagine 42.

This sequence belongs to the acylphosphatase family.

It catalyses the reaction an acyl phosphate + H2O = a carboxylate + phosphate + H(+). This Xenopus laevis (African clawed frog) protein is Acylphosphatase-1 (acyp1).